A 63-amino-acid chain; its full sequence is Large ribosomal subunit protein eL37 (63 aa).

Zn(2+) contacts are provided by Cys20, Cys23, Cys35, and Cys38. A C4-type zinc finger spans residues 20–38; the sequence is CRRCGHHSFNVRKGYCAHC.

Belongs to the eukaryotic ribosomal protein eL37 family. It depends on Zn(2+) as a cofactor.

Functionally, binds to the 23S rRNA. This is Large ribosomal subunit protein eL37 from Thermofilum pendens (strain DSM 2475 / Hrk 5).